A 386-amino-acid chain; its full sequence is Eukaryotic translation initiation factor 3 subunit M (386 aa).

In terms of domain architecture, PCI spans 181–343 (NSELASKVMI…RKVHISSTMH (163 aa)).

Belongs to the eIF-3 subunit M family. As to quaternary structure, component of the eukaryotic translation initiation factor 3 (eIF-3) complex.

The protein resides in the cytoplasm. Component of the eukaryotic translation initiation factor 3 (eIF-3) complex, which is involved in protein synthesis of a specialized repertoire of mRNAs and, together with other initiation factors, stimulates binding of mRNA and methionyl-tRNAi to the 40S ribosome. The eIF-3 complex specifically targets and initiates translation of a subset of mRNAs involved in cell proliferation. This Aedes aegypti (Yellowfever mosquito) protein is Eukaryotic translation initiation factor 3 subunit M.